We begin with the raw amino-acid sequence, 424 residues long: Adenylosuccinate synthetase (424 aa).

GTP-binding positions include 12–18 (GDEGKGK) and 40–42 (GHT). The active-site Proton acceptor is the Asp-13. Mg(2+) is bound by residues Asp-13 and Gly-40. IMP is bound by residues 13 to 16 (DEGK), 38 to 41 (NAGH), Thr-130, Arg-144, Asn-220, Thr-235, and Arg-299. The active-site Proton donor is His-41. 295–301 (VTTGRRR) lines the substrate pocket. Residues Arg-301, 327-329 (KLD), and 412-414 (GTG) contribute to the GTP site.

It belongs to the adenylosuccinate synthetase family. In terms of assembly, homodimer. Requires Mg(2+) as cofactor.

Its subcellular location is the cytoplasm. It catalyses the reaction IMP + L-aspartate + GTP = N(6)-(1,2-dicarboxyethyl)-AMP + GDP + phosphate + 2 H(+). It functions in the pathway purine metabolism; AMP biosynthesis via de novo pathway; AMP from IMP: step 1/2. Its function is as follows. Plays an important role in the de novo pathway and in the salvage pathway of purine nucleotide biosynthesis. Catalyzes the first committed step in the biosynthesis of AMP from IMP. In Aspergillus clavatus (strain ATCC 1007 / CBS 513.65 / DSM 816 / NCTC 3887 / NRRL 1 / QM 1276 / 107), this protein is Adenylosuccinate synthetase.